The chain runs to 398 residues: MQVTLLRSFSNDIPEFTVTEITGVLQRFMQETFYSIKVRGEISGLSRPNSGHVYFTLKDSNSVINAVCWNGTRLKVQFCDGLEVVCTGYLSVYQSKYQLIVTDMTLAGYGKLAAMLAELKKKLELEGLFSPARKKKLPFLPTKIGVITSPTGAVISDIISRVKQRFPSNVVVWPVQVQGDRASAMVIEAIKGFNSFADPPHVIIVARGGGSFEDLWPFNDEELARTVAASKIPIVSAIGHETDFTIIDYAADLRASTPTAAVELVLPEKSKLVASINEKFVRTKISFERIVKMQEYRLLRLHGILTEKKNSLLQKSRVALEYQQKIRYLLQVSLLRKRQYLESLMQRLSYYDSKHILSVGYAIVRDEHEKQISSVEALSTNDTITIELKDGKRRAIII.

It belongs to the XseA family. As to quaternary structure, heterooligomer composed of large and small subunits.

The protein localises to the cytoplasm. It catalyses the reaction Exonucleolytic cleavage in either 5'- to 3'- or 3'- to 5'-direction to yield nucleoside 5'-phosphates.. Bidirectionally degrades single-stranded DNA into large acid-insoluble oligonucleotides, which are then degraded further into small acid-soluble oligonucleotides. In Anaplasma phagocytophilum (strain HZ), this protein is Exodeoxyribonuclease 7 large subunit.